The primary structure comprises 395 residues: Hdr-like menaquinol oxidoreductase integral membrane subunit (395 aa).

10 consecutive transmembrane segments (helical) span residues 15–35 (YFAL…AYVL), 57–77 (IPYF…AGVF), 88–108 (IAAY…ALDI), 126–146 (IFSW…IYLL), 158–178 (FMAG…GAIY), 196–216 (FIVC…YFTF), 231–251 (LALI…VEGL), 274–294 (VFWS…IIVL), 305–325 (ITFA…YLII), and 364–384 (IGLI…FALI).

Belongs to the NrfD family. In terms of assembly, consists of five subunits: an integral membrane subunit, a cytochrome b-like subunit, a cytochrome c subunit and two iron-sulfur subunits.

Its subcellular location is the cell membrane. In terms of biological role, has menaquinol-oxidizing activity. HmeB subunit may function as a menaquinol-oxidizing site. HmeA, HmeB and HmeE subunits may together catalyze electron transfer from menaquinol to cytochrome c. The polypeptide is Hdr-like menaquinol oxidoreductase integral membrane subunit (hmeB) (Archaeoglobus fulgidus (strain ATCC 49558 / DSM 4304 / JCM 9628 / NBRC 100126 / VC-16)).